The following is a 79-amino-acid chain: Small ribosomal subunit protein bS18 (79 aa).

This sequence belongs to the bacterial ribosomal protein bS18 family. In terms of assembly, part of the 30S ribosomal subunit. Forms a tight heterodimer with protein bS6.

Its function is as follows. Binds as a heterodimer with protein bS6 to the central domain of the 16S rRNA, where it helps stabilize the platform of the 30S subunit. In Renibacterium salmoninarum (strain ATCC 33209 / DSM 20767 / JCM 11484 / NBRC 15589 / NCIMB 2235), this protein is Small ribosomal subunit protein bS18.